Reading from the N-terminus, the 178-residue chain is Zinc finger CCHC domain-containing protein 10 (178 aa).

Residues 21 to 38 (VRCQKCLEFGHWTYECKG) form a CCHC-type zinc finger. The interval 66-178 (QSIGETNIEK…EPQKKKKKKK (113 aa)) is disordered. Low complexity-rich tracts occupy residues 85–113 (SVTS…SSSS) and 121–164 (SLSS…SSES).

This is Zinc finger CCHC domain-containing protein 10 (Zcchc10) from Mus musculus (Mouse).